The following is a 388-amino-acid chain: Succinate--CoA ligase [ADP-forming] subunit beta (388 aa).

The 236-residue stretch at 9 to 244 (KSLFAEYGLP…PSQDDAREAH (236 aa)) folds into the ATP-grasp domain. ATP is bound by residues Lys-46, 53–55 (GRG), Glu-99, Thr-102, and Glu-107. Mg(2+) is bound by residues Asn-199 and Asp-213. Substrate is bound by residues Asn-264 and 321-323 (GIV).

Belongs to the succinate/malate CoA ligase beta subunit family. As to quaternary structure, heterotetramer of two alpha and two beta subunits. Requires Mg(2+) as cofactor.

It carries out the reaction succinate + ATP + CoA = succinyl-CoA + ADP + phosphate. The catalysed reaction is GTP + succinate + CoA = succinyl-CoA + GDP + phosphate. It functions in the pathway carbohydrate metabolism; tricarboxylic acid cycle; succinate from succinyl-CoA (ligase route): step 1/1. In terms of biological role, succinyl-CoA synthetase functions in the citric acid cycle (TCA), coupling the hydrolysis of succinyl-CoA to the synthesis of either ATP or GTP and thus represents the only step of substrate-level phosphorylation in the TCA. The beta subunit provides nucleotide specificity of the enzyme and binds the substrate succinate, while the binding sites for coenzyme A and phosphate are found in the alpha subunit. This chain is Succinate--CoA ligase [ADP-forming] subunit beta, found in Shewanella woodyi (strain ATCC 51908 / MS32).